Here is a 67-residue protein sequence, read N- to C-terminus: Small ribosomal subunit protein bS21 (67 aa).

The protein belongs to the bacterial ribosomal protein bS21 family.

The chain is Small ribosomal subunit protein bS21 from Rhodospirillum centenum (strain ATCC 51521 / SW).